The sequence spans 417 residues: Gamma-glutamyl phosphate reductase (417 aa).

This sequence belongs to the gamma-glutamyl phosphate reductase family.

The protein resides in the cytoplasm. The enzyme catalyses L-glutamate 5-semialdehyde + phosphate + NADP(+) = L-glutamyl 5-phosphate + NADPH + H(+). It participates in amino-acid biosynthesis; L-proline biosynthesis; L-glutamate 5-semialdehyde from L-glutamate: step 2/2. In terms of biological role, catalyzes the NADPH-dependent reduction of L-glutamate 5-phosphate into L-glutamate 5-semialdehyde and phosphate. The product spontaneously undergoes cyclization to form 1-pyrroline-5-carboxylate. The protein is Gamma-glutamyl phosphate reductase of Hydrogenovibrio crunogenus (strain DSM 25203 / XCL-2) (Thiomicrospira crunogena).